The following is a 75-amino-acid chain: UPF0352 protein PMI0824 (75 aa).

It belongs to the UPF0352 family.

The chain is UPF0352 protein PMI0824 from Proteus mirabilis (strain HI4320).